Consider the following 154-residue polypeptide: Interleukin-2 (154 aa).

Residues 1 to 20 (MYKMQLLCCIALTLALMANG) form the signal peptide. Threonine 23 carries an O-linked (GalNAc...) threonine glycan. An intrachain disulfide couples cysteine 78 to cysteine 126.

It belongs to the IL-2 family.

Its subcellular location is the secreted. Functionally, cytokine produced by activated CD4-positive helper T-cells and to a lesser extend activated CD8-positive T-cells and natural killer (NK) cells that plays pivotal roles in the immune response and tolerance. Binds to a receptor complex composed of either the high-affinity trimeric IL-2R (IL2RA/CD25, IL2RB/CD122 and IL2RG/CD132) or the low-affinity dimeric IL-2R (IL2RB and IL2RG). Interaction with the receptor leads to oligomerization and conformation changes in the IL-2R subunits resulting in downstream signaling starting with phosphorylation of JAK1 and JAK3. In turn, JAK1 and JAK3 phosphorylate the receptor to form a docking site leading to the phosphorylation of several substrates including STAT5. This process leads to activation of several pathways including STAT, phosphoinositide-3-kinase/PI3K and mitogen-activated protein kinase/MAPK pathways. Functions as a T-cell growth factor and can increase NK-cell cytolytic activity as well. Promotes strong proliferation of activated B-cells and subsequently immunoglobulin production. Plays a pivotal role in regulating the adaptive immune system by controlling the survival and proliferation of regulatory T-cells, which are required for the maintenance of immune tolerance. Moreover, participates in the differentiation and homeostasis of effector T-cell subsets, including Th1, Th2, Th17 as well as memory CD8-positive T-cells. The polypeptide is Interleukin-2 (IL2) (Sus scrofa (Pig)).